The following is a 96-amino-acid chain: Phosphoribosyl-ATP pyrophosphatase (96 aa).

Belongs to the PRA-PH family.

The protein localises to the cytoplasm. The catalysed reaction is 1-(5-phospho-beta-D-ribosyl)-ATP + H2O = 1-(5-phospho-beta-D-ribosyl)-5'-AMP + diphosphate + H(+). It functions in the pathway amino-acid biosynthesis; L-histidine biosynthesis; L-histidine from 5-phospho-alpha-D-ribose 1-diphosphate: step 2/9. The polypeptide is Phosphoribosyl-ATP pyrophosphatase (Methanobrevibacter smithii (strain ATCC 35061 / DSM 861 / OCM 144 / PS)).